The primary structure comprises 144 residues: Large ribosomal subunit protein uL13 (144 aa).

It belongs to the universal ribosomal protein uL13 family. Part of the 50S ribosomal subunit.

Functionally, this protein is one of the early assembly proteins of the 50S ribosomal subunit, although it is not seen to bind rRNA by itself. It is important during the early stages of 50S assembly. This Nitrosospira multiformis (strain ATCC 25196 / NCIMB 11849 / C 71) protein is Large ribosomal subunit protein uL13.